The primary structure comprises 920 residues: Nonribosomal peptide synthetase atrA (920 aa).

The segment at 13–428 is adenylation (A) domain; the sequence is AAAQERCGRV…AGRLKETMII (416 aa). Residues 558–637 enclose the Carrier domain; that stretch reads PPKDELERSL…ELSAALHDLQ (80 aa). At Ser595 the chain carries O-(pantetheine 4'-phosphoryl)serine. The tract at residues 656–905 is thioesterase (TE) domain; sequence PLWLIHPGVG…YTMLAPEHVF (250 aa).

This sequence belongs to the NRP synthetase family.

It carries out the reaction 2 3-(4-hydroxyphenyl)pyruvate + 2 ATP = atromentin + 2 AMP + 2 diphosphate + H(+). Nonribosomal peptide synthetase that mediates the biosynthesis of atromentin. AtrA first activates 4-hydroxyphenylpyruvate (HPPA) through its A domain to AMP-HPPA. The HPPA unit is then loaded to the T domain and eventually transferred to the TE domain. Another HPPA unit is then loaded onto the T domain. The TE domain then catalyzes the condensation of the two HPPA units and the release of atromentin via cyclization. In Aspergillus terreus (strain NIH 2624 / FGSC A1156), this protein is Nonribosomal peptide synthetase atrA.